The chain runs to 86 residues: Phosphocarrier protein HPr (86 aa).

The HPr domain maps to 1-86 (MVKKEAIIKA…LAELIESFKE (86 aa)). The active-site Pros-phosphohistidine intermediate is the His-15.

Belongs to the HPr family.

Its subcellular location is the cytoplasm. In terms of biological role, general (non sugar-specific) component of the phosphoenolpyruvate-dependent sugar phosphotransferase system (sugar PTS). This major carbohydrate active-transport system catalyzes the phosphorylation of incoming sugar substrates concomitantly with their translocation across the cell membrane. The phosphoryl group from phosphoenolpyruvate (PEP) is transferred to the phosphoryl carrier protein HPr by enzyme I. Phospho-HPr then transfers it to the PTS EIIA domain. The protein is Phosphocarrier protein HPr (ptsH) of Borreliella burgdorferi (strain ATCC 35210 / DSM 4680 / CIP 102532 / B31) (Borrelia burgdorferi).